We begin with the raw amino-acid sequence, 160 residues long: Small ribosomal subunit protein uS9 (160 aa).

The protein belongs to the universal ribosomal protein uS9 family.

This Cereibacter sphaeroides (strain ATCC 17029 / ATH 2.4.9) (Rhodobacter sphaeroides) protein is Small ribosomal subunit protein uS9.